The sequence spans 409 residues: Probable beta-1,3-galactosyltransferase 3 (409 aa).

A helical; Signal-anchor for type II membrane protein membrane pass occupies residues 20–42 (WTFLLCFGSFCFGILFTDRMWII).

This sequence belongs to the glycosyltransferase 31 family. It depends on Mn(2+) as a cofactor.

It localises to the golgi apparatus membrane. Its pathway is protein modification; protein glycosylation. In terms of biological role, beta-1,3-galactosyltransferase that transfers galactose from UDP-galactose to substrates with a terminal glycosyl residue. The chain is Probable beta-1,3-galactosyltransferase 3 (B3GALT3) from Arabidopsis thaliana (Mouse-ear cress).